The following is a 399-amino-acid chain: Phosphoglycerate kinase (399 aa).

Substrate contacts are provided by residues 22–24 (DFN), Arg38, 61–64 (HLGR), Arg119, and Arg152. Residues Lys205, Gly296, Glu327, and 353–356 (GGDT) each bind ATP.

This sequence belongs to the phosphoglycerate kinase family. In terms of assembly, monomer.

It localises to the cytoplasm. The enzyme catalyses (2R)-3-phosphoglycerate + ATP = (2R)-3-phospho-glyceroyl phosphate + ADP. It participates in carbohydrate degradation; glycolysis; pyruvate from D-glyceraldehyde 3-phosphate: step 2/5. The protein is Phosphoglycerate kinase of Nitratiruptor sp. (strain SB155-2).